Here is a 54-residue protein sequence, read N- to C-terminus: Apelin receptor early endogenous ligand (54 aa).

The first 23 residues, Met1–Gln23, serve as a signal peptide directing secretion.

This sequence belongs to the Elabela/Toddler family. In terms of assembly, interacts with APLNR. Expressed in the placenta. Expressed in syncytiotrophoblasts of the placenta labyrinth at 10.5 dpc. Expressed in placental chorionic trophoblasts (at protein level). Expressed in a small population of epiblast cells in the distal half of the embryo at 7 dpc. Expressed in newly formed definitive endoderm cells in the proximal half of the embryo, while it is not present in extra-embryonic endoderm at 7.5 dpc. This expression pattern then changes to the ventral aspect of the developing foregut pocket and the entire hindgut pocket at 8.5 dpc, before becoming restricted to the foregut overlying the heart and the posterior-most hindgut. Not detected in endothelial precursor cells of the yolk sac at 8 dpc. Expressed in extraembryonic tissues as well as in the chorion at 8.25 dpc. Expressed in endometrial stroma of the uterus of pregnant mice at 8.5 dpc. Expressed in the developing heart, caudal neural tube and trophobasts at 9 dpc. Expressed in the chorionic plate of the chorioallantoic placenta at 9 dpc. Expressed in the posterior half of the ventral neural tube at 9.25 dpc. Expressed in trophoblast cells at the periphery of the placenta at 9.5 dpc. Expressed in collecting ducts of the kidney of pregnant mice at 10.5 dpc. Expressed in the epicardium of the developing heart at 11.5 dpc. Expressed weakly in the adult heart. Expressed in endothelial cells and fibroblasts and weakly in cardiomyocytes.

Its subcellular location is the secreted. The protein resides in the extracellular space. In terms of biological role, peptide hormone that functions as endogenous ligand for the G-protein-coupled apelin receptor (APLNR/APJ), that plays a role in the regulation of normal cardiovascular function and fluid homeostasis. Functions as a balanced agonist activating both G(i) protein pathway and beta-arrestin pathway of APLNR. Downstream G proteins activation, apelin can inhibit cAMP production and activate key intracellular effectors such as ERKs. On the other hand, APLNR activation induces beta-arrestin recruitment to the membrane leading to desensitization and internalization of the receptor. Required for mesendodermal differentiation, blood vessels formation and heart morphogenesis during early development and for adult cardiovascular homeostasis. Acts as a motogen by promoting mesendodermal cell migration during gastrulation by binding and activating APLNR. Acts as an early embryonic regulator of cellular movement with a role in migration and development of cardiac progenitor cells. May act as a chemoattractant for the activation of angioblast migration toward the embryonic midline, i.e. the position of the future vessel formation, during vasculogenesis. Positively regulates sinus venosus (SV)-derived endothelial cells migration into the developing heart to promote coronary blood vessel sprouting. Plays a role in placental vascular development; promotes placental trophoblast invasion and spiral artery remodeling in the uterus. Involved in the regulation of maternal cardiovascular homeostasis to prevent gestational hypertension and for potent cardioprotective functions during heart failure. Mediates myocardial contractility in an ERK1/2-dependent manner. This is Apelin receptor early endogenous ligand from Mus musculus (Mouse).